The sequence spans 272 residues: GTP cyclohydrolase FolE2 (272 aa).

Belongs to the GTP cyclohydrolase IV family.

It carries out the reaction GTP + H2O = 7,8-dihydroneopterin 3'-triphosphate + formate + H(+). Its pathway is cofactor biosynthesis; 7,8-dihydroneopterin triphosphate biosynthesis; 7,8-dihydroneopterin triphosphate from GTP: step 1/1. Functionally, converts GTP to 7,8-dihydroneopterin triphosphate. This chain is GTP cyclohydrolase FolE2, found in Polynucleobacter asymbioticus (strain DSM 18221 / CIP 109841 / QLW-P1DMWA-1) (Polynucleobacter necessarius subsp. asymbioticus).